The primary structure comprises 181 residues: Adenine phosphoribosyltransferase (181 aa).

The protein belongs to the purine/pyrimidine phosphoribosyltransferase family. Homodimer.

The protein localises to the cytoplasm. The catalysed reaction is AMP + diphosphate = 5-phospho-alpha-D-ribose 1-diphosphate + adenine. It functions in the pathway purine metabolism; AMP biosynthesis via salvage pathway; AMP from adenine: step 1/1. Catalyzes a salvage reaction resulting in the formation of AMP, that is energically less costly than de novo synthesis. In Neorhizobium galegae (Rhizobium galegae), this protein is Adenine phosphoribosyltransferase.